We begin with the raw amino-acid sequence, 475 residues long: Ribulose bisphosphate carboxylase large chain (475 aa).

Residues 1–2 (MS) constitute a propeptide that is removed on maturation. Proline 3 carries the N-acetylproline modification. The residue at position 14 (lysine 14) is an N6,N6,N6-trimethyllysine. Substrate-binding residues include asparagine 123 and threonine 173. Lysine 175 serves as the catalytic Proton acceptor. Lysine 177 is a binding site for substrate. Mg(2+)-binding residues include lysine 201, aspartate 203, and glutamate 204. Lysine 201 carries the post-translational modification N6-carboxylysine. Catalysis depends on histidine 294, which acts as the Proton acceptor. The substrate site is built by arginine 295, histidine 327, and serine 379.

It belongs to the RuBisCO large chain family. Type I subfamily. In terms of assembly, heterohexadecamer of 8 large chains and 8 small chains; disulfide-linked. The disulfide link is formed within the large subunit homodimers. It depends on Mg(2+) as a cofactor. Post-translationally, the disulfide bond which can form in the large chain dimeric partners within the hexadecamer appears to be associated with oxidative stress and protein turnover.

It is found in the plastid. The protein localises to the chloroplast. It carries out the reaction 2 (2R)-3-phosphoglycerate + 2 H(+) = D-ribulose 1,5-bisphosphate + CO2 + H2O. The enzyme catalyses D-ribulose 1,5-bisphosphate + O2 = 2-phosphoglycolate + (2R)-3-phosphoglycerate + 2 H(+). In terms of biological role, ruBisCO catalyzes two reactions: the carboxylation of D-ribulose 1,5-bisphosphate, the primary event in carbon dioxide fixation, as well as the oxidative fragmentation of the pentose substrate in the photorespiration process. Both reactions occur simultaneously and in competition at the same active site. In Psilotum nudum (Whisk fern), this protein is Ribulose bisphosphate carboxylase large chain.